The following is a 147-amino-acid chain: Bis(5'-nucleosyl)-tetraphosphatase [asymmetrical] (147 aa).

In terms of domain architecture, Nudix hydrolase spans 1 to 139 (MALRACGLII…EMKAALQEGH (139 aa)). Alanine 2 carries the post-translational modification N-acetylalanine. A Nudix box motif is present at residues 43 to 64 (GHVEPGEDDLETALRETQEEAG).

Belongs to the Nudix hydrolase family. A divalent metal cation is required as a cofactor.

The catalysed reaction is P(1),P(4)-bis(5'-guanosyl) tetraphosphate + H2O = GMP + GTP + 2 H(+). It carries out the reaction a 5'-end CoA-ribonucleoside in mRNA + H2O = a 5'-end phospho-adenosine-phospho-ribonucleoside in mRNA + (R)-4'-phosphopantetheine + 2 H(+). It catalyses the reaction a 5'-end FAD-phospho-ribonucleoside in mRNA + H2O = a 5'-end phospho-adenosine-phospho-ribonucleoside in mRNA + FMN + 2 H(+). Catalyzes the asymmetric hydrolysis of diadenosine 5',5'''-P1,P4-tetraphosphate (Ap4A) to yield AMP and ATP. Exhibits decapping activity towards FAD-capped RNAs and dpCoA-capped RNAs in vitro. The protein is Bis(5'-nucleosyl)-tetraphosphatase [asymmetrical] (NUDT2) of Homo sapiens (Human).